Here is a 1270-residue protein sequence, read N- to C-terminus: DNA-directed RNA polymerase subunit beta (1270 aa).

It belongs to the RNA polymerase beta chain family. As to quaternary structure, the RNAP catalytic core consists of 2 alpha, 1 beta, 1 beta' and 1 omega subunit. When a sigma factor is associated with the core the holoenzyme is formed, which can initiate transcription.

It catalyses the reaction RNA(n) + a ribonucleoside 5'-triphosphate = RNA(n+1) + diphosphate. DNA-dependent RNA polymerase catalyzes the transcription of DNA into RNA using the four ribonucleoside triphosphates as substrates. The protein is DNA-directed RNA polymerase subunit beta of Flavobacterium psychrophilum (strain ATCC 49511 / DSM 21280 / CIP 103535 / JIP02/86).